The primary structure comprises 424 residues: Glutamate-1-semialdehyde 2,1-aminomutase (424 aa).

Lys-263 bears the N6-(pyridoxal phosphate)lysine mark.

Belongs to the class-III pyridoxal-phosphate-dependent aminotransferase family. HemL subfamily. Homodimer. The cofactor is pyridoxal 5'-phosphate.

Its subcellular location is the cytoplasm. The catalysed reaction is (S)-4-amino-5-oxopentanoate = 5-aminolevulinate. The protein operates within porphyrin-containing compound metabolism; protoporphyrin-IX biosynthesis; 5-aminolevulinate from L-glutamyl-tRNA(Glu): step 2/2. The sequence is that of Glutamate-1-semialdehyde 2,1-aminomutase from Campylobacter jejuni subsp. jejuni serotype O:2 (strain ATCC 700819 / NCTC 11168).